A 410-amino-acid chain; its full sequence is MDTFILTYSILFLALFIESIHSRYSRVAEHIRTRKRPDKELTEEEFKLVFHRSSTEEIDYDFVNLTTEITEIERKVLFTIDDKDYHLKLTRASSSVIPSGTLIRSAILWTDNQTHFHDEDSTDEHWGSSHIYEDLDKMATFLLRDDDDFTRYDGVFGGGKDMKVVGSLPARLVNIYGANYHFIYYANGSVSDVILNGAKQVVGSANTQAGLNNFYPKLLVLVDYTLFKILNKSYEETIRYLAIFWNAVDMKFKKFETPKINIIITGIIVPKNEGALKHVYDARIKSDMQKVNATKIITNSEHFFGANFSTESYFDNYDATFTMASLNDLEGQTGLAYIGAICKNNHNNAYVKDSGVFSGVLAAAHELGHLLASDHDEDVGCPGEINYNTRLTGTIMAEYRNNNVSKFIWS.

An N-terminal signal peptide occupies residues 1–22 (MDTFILTYSILFLALFIESIHS). N-linked (GlcNAc...) asparagine glycans are attached at residues Asn-64, Asn-112, Asn-187, Asn-231, Asn-292, and Asn-307. The Peptidase M12B domain maps to 214–410 (FYPKLLVLVD…NNNVSKFIWS (197 aa)). Zn(2+) is bound at residue His-365. Residue Glu-366 is part of the active site. 2 residues coordinate Zn(2+): His-369 and His-375. N-linked (GlcNAc...) asparagine glycosylation occurs at Asn-403.

It in the C-terminal section; belongs to the venom metalloproteinase (M12B) family. In terms of assembly, monomer. Zn(2+) serves as cofactor. As to expression, expressed by the venom gland.

The protein localises to the secreted. With respect to regulation, the gelatinase activity is inhibited by EDTA. Functionally, the recombinant protein has gelatinase activity. In vivo, injection of this recombinant into fifth instar L.oleracea (host) larvae results in partial insect mortality associated with the molt to sixth instar, with surviving insects showing retarded development and growth. The polypeptide is Venom metalloproteinase 2 (Eulophus pennicornis (Parasitoid wasp)).